The chain runs to 29 residues: Toxin Bl-4 (29 aa).

The protein belongs to the long (4 C-C) scorpion toxin superfamily. Sodium channel inhibitor family. Beta subfamily. Expressed by the venom gland.

Its subcellular location is the secreted. Its function is as follows. Excitatory insect beta-toxins induce a spastic paralysis. They bind voltage-independently at site-4 of sodium channels (Nav) and shift the voltage of activation toward more negative potentials thereby affecting sodium channel activation and promoting spontaneous and repetitive firing. The fraction to which this protein belongs exhibits low toxicity and induces transient paralysis in all insects tested (the crickets A.domesticus). This is Toxin Bl-4 from Buthacus leptochelys (Egyptian fat-tailed scorpion).